The chain runs to 366 residues: NADH-quinone oxidoreductase subunit D (366 aa).

It belongs to the complex I 49 kDa subunit family. In terms of assembly, NDH-1 is composed of 14 different subunits. Subunits NuoB, C, D, E, F, and G constitute the peripheral sector of the complex.

Its subcellular location is the cell membrane. It catalyses the reaction a quinone + NADH + 5 H(+)(in) = a quinol + NAD(+) + 4 H(+)(out). NDH-1 shuttles electrons from NADH, via FMN and iron-sulfur (Fe-S) centers, to quinones in the respiratory chain. The immediate electron acceptor for the enzyme in this species is believed to be a menaquinone. Couples the redox reaction to proton translocation (for every two electrons transferred, four hydrogen ions are translocated across the cytoplasmic membrane), and thus conserves the redox energy in a proton gradient. The polypeptide is NADH-quinone oxidoreductase subunit D (Bacillus cereus (strain ATCC 10987 / NRS 248)).